A 175-amino-acid polypeptide reads, in one-letter code: Ribosome maturation factor RimP (175 aa).

Residues 152 to 175 (EFNRPTDGPGDDGDDGGDDEAGEA) form a disordered region. A compositionally biased stretch (acidic residues) spans 160–175 (PGDDGDDGGDDEAGEA).

Belongs to the RimP family.

Its subcellular location is the cytoplasm. Functionally, required for maturation of 30S ribosomal subunits. The sequence is that of Ribosome maturation factor RimP from Nocardioides sp. (strain ATCC BAA-499 / JS614).